A 347-amino-acid chain; its full sequence is DNA-directed RNA polymerase subunit alpha (347 aa).

The tract at residues 1–243 (MLIKQGDRLI…DQISVFINFD (243 aa)) is alpha N-terminal domain (alpha-NTD). Residues 260 to 347 (FNEHLFKSID…EWKRKQQHEA (88 aa)) form an alpha C-terminal domain (alpha-CTD) region.

Belongs to the RNA polymerase alpha chain family. As to quaternary structure, homodimer. The RNAP catalytic core consists of 2 alpha, 1 beta, 1 beta' and 1 omega subunit. When a sigma factor is associated with the core the holoenzyme is formed, which can initiate transcription.

The catalysed reaction is RNA(n) + a ribonucleoside 5'-triphosphate = RNA(n+1) + diphosphate. Functionally, DNA-dependent RNA polymerase catalyzes the transcription of DNA into RNA using the four ribonucleoside triphosphates as substrates. This Nitratidesulfovibrio vulgaris (strain ATCC 29579 / DSM 644 / CCUG 34227 / NCIMB 8303 / VKM B-1760 / Hildenborough) (Desulfovibrio vulgaris) protein is DNA-directed RNA polymerase subunit alpha.